The chain runs to 66 residues: Large ribosomal subunit protein bL35 (66 aa).

It belongs to the bacterial ribosomal protein bL35 family.

The sequence is that of Large ribosomal subunit protein bL35 from Jannaschia sp. (strain CCS1).